The primary structure comprises 93 residues: UPF0390 protein C24B10.18 (93 aa).

The tract at residues 1 to 32 (MAQGEFKKKKNSSANKGGRVTKHSKNPKKGAR) is disordered. Basic residues predominate over residues 19–31 (RVTKHSKNPKKGA).

Belongs to the UPF0390 family.

The chain is UPF0390 protein C24B10.18 from Schizosaccharomyces pombe (strain 972 / ATCC 24843) (Fission yeast).